The primary structure comprises 605 residues: Probable potassium transport system protein Kup 1 (605 aa).

Transmembrane regions (helical) follow at residues 16–36, 46–66, 97–117, 138–158, 166–186, 212–232, 248–268, 287–307, 339–359, 368–388, 397–417, and 418–438; these read ALGL…TVIF, VFGI…MEYA, VAFA…DGVI, GLST…LFSV, VAGA…VTGV, GLAG…GEAL, WYFV…FAIT, LYIP…QSII, IYLG…MLLF, AYGM…IIVF, ALVA…TFSK, and IPHG…TIII.

This sequence belongs to the HAK/KUP transporter (TC 2.A.72) family.

It localises to the cell inner membrane. It carries out the reaction K(+)(in) + H(+)(in) = K(+)(out) + H(+)(out). Transport of potassium into the cell. Likely operates as a K(+):H(+) symporter. The chain is Probable potassium transport system protein Kup 1 from Geobacter metallireducens (strain ATCC 53774 / DSM 7210 / GS-15).